The primary structure comprises 216 residues: Regulatory protein RecX (216 aa).

This sequence belongs to the RecX family.

Its subcellular location is the cytoplasm. Modulates RecA activity. This is Regulatory protein RecX from Clostridium tetani (strain Massachusetts / E88).